A 301-amino-acid chain; its full sequence is Ribonuclease Z (301 aa).

His-63, His-65, Asp-67, His-68, His-141, Asp-204, and His-262 together coordinate Zn(2+). The active-site Proton acceptor is the Asp-67.

The protein belongs to the RNase Z family. Homodimer. Zn(2+) serves as cofactor.

The catalysed reaction is Endonucleolytic cleavage of RNA, removing extra 3' nucleotides from tRNA precursor, generating 3' termini of tRNAs. A 3'-hydroxy group is left at the tRNA terminus and a 5'-phosphoryl group is left at the trailer molecule.. Functionally, zinc phosphodiesterase, which displays some tRNA 3'-processing endonuclease activity. Probably involved in tRNA maturation, by removing a 3'-trailer from precursor tRNA. The protein is Ribonuclease Z of Streptomyces avermitilis (strain ATCC 31267 / DSM 46492 / JCM 5070 / NBRC 14893 / NCIMB 12804 / NRRL 8165 / MA-4680).